Consider the following 584-residue polypeptide: Putative sel1-like repeat-containing protein L18 (584 aa).

6 Sel1-like repeats span residues 132-167 (SMAQ…DQNN), 168-203 (KYGL…CQNF), 204-237 (SKAQ…NQNH), 238-273 (SSAQ…SQGL), 274-309 (NSAK…YDDG), and 316-351 (EVAM…NTKN).

This chain is Putative sel1-like repeat-containing protein L18, found in Acanthamoeba polyphaga (Amoeba).